We begin with the raw amino-acid sequence, 234 residues long: DEAD-box ATP-dependent RNA helicase 3 (234 aa).

Positions 120-148 match the Q motif motif; sequence LAVSRLGLPQKLVETLEKRGITKLFPIQR. The Helicase ATP-binding domain occupies 151–234; the sequence is LVPALEGRDI…RTVCVYGGVS (84 aa). 164–171 serves as a coordination point for ATP; that stretch reads AKTGTGKT.

Belongs to the DEAD box helicase family. DDX21/DDX50 subfamily.

The sequence is that of DEAD-box ATP-dependent RNA helicase 3 from Helianthus annuus (Common sunflower).